The following is a 1053-amino-acid chain: Zinc finger and BTB domain-containing protein 11 (1053 aa).

Positions leucine 141–leucine 156 are enriched in acidic residues. A disordered region spans residues leucine 141–lysine 173. Low complexity predominate over residues serine 157 to lysine 168. The 69-residue stretch at cysteine 214 to phenylalanine 282 folds into the BTB domain. The tract at residues leucine 546 to glutamate 566 is disordered. Basic and acidic residues predominate over residues proline 556–glutamate 566. 2 consecutive C2H2-type zinc fingers follow at residues histidine 569 to histidine 591 and tyrosine 597 to histidine 619. The disordered stretch occupies residues histidine 619 to glutamate 643. The segment covering serine 626–serine 642 has biased composition (low complexity). 10 consecutive C2H2-type zinc fingers follow at residues phenylalanine 651 to histidine 673, histidine 679 to histidine 701, phenylalanine 707 to histidine 729, tyrosine 735 to histidine 757, tyrosine 766 to histidine 788, phenylalanine 794 to histidine 816, tyrosine 822 to histidine 846, arginine 858 to histidine 880, phenylalanine 886 to histidine 908, and tyrosine 914 to histidine 937. Lysine 1043 participates in a covalent cross-link: Glycyl lysine isopeptide (Lys-Gly) (interchain with G-Cter in SUMO2). Serine 1050 bears the Phosphoserine mark.

The protein localises to the nucleus. The protein resides in the nucleolus. May be involved in transcriptional regulation. This is Zinc finger and BTB domain-containing protein 11 from Homo sapiens (Human).